We begin with the raw amino-acid sequence, 397 residues long: Phosphoglycerate kinase (397 aa).

Residues 19-21, arginine 35, 58-61, arginine 117, and arginine 150 contribute to the substrate site; these read DFN and HLGR. Residues lysine 201, glutamate 323, and 349–352 each bind ATP; that span reads GGDS.

It belongs to the phosphoglycerate kinase family. In terms of assembly, monomer.

The protein localises to the cytoplasm. The catalysed reaction is (2R)-3-phosphoglycerate + ATP = (2R)-3-phospho-glyceroyl phosphate + ADP. It participates in carbohydrate degradation; glycolysis; pyruvate from D-glyceraldehyde 3-phosphate: step 2/5. This chain is Phosphoglycerate kinase, found in Syntrophobacter fumaroxidans (strain DSM 10017 / MPOB).